The sequence spans 829 residues: DNA ligase (829 aa).

The interval methionine 1–histidine 23 is disordered. Residues aspartate 47–aspartate 51, serine 96–leucine 97, and glutamate 130 contribute to the NAD(+) site. The active-site N6-AMP-lysine intermediate is the lysine 132. Residues arginine 153, glutamate 190, lysine 306, and lysine 330 each coordinate NAD(+). Positions 453, 456, 477, and 483 each coordinate Zn(2+). The region spanning alanine 750–alanine 829 is the BRCT domain.

The protein belongs to the NAD-dependent DNA ligase family. LigA subfamily. Mg(2+) serves as cofactor. It depends on Mn(2+) as a cofactor.

It carries out the reaction NAD(+) + (deoxyribonucleotide)n-3'-hydroxyl + 5'-phospho-(deoxyribonucleotide)m = (deoxyribonucleotide)n+m + AMP + beta-nicotinamide D-nucleotide.. Functionally, DNA ligase that catalyzes the formation of phosphodiester linkages between 5'-phosphoryl and 3'-hydroxyl groups in double-stranded DNA using NAD as a coenzyme and as the energy source for the reaction. It is essential for DNA replication and repair of damaged DNA. This Methylobacterium nodulans (strain LMG 21967 / CNCM I-2342 / ORS 2060) protein is DNA ligase.